The primary structure comprises 303 residues: Probable 5-dehydro-4-deoxyglucarate dehydratase (303 aa).

The protein belongs to the DapA family.

The catalysed reaction is 5-dehydro-4-deoxy-D-glucarate + H(+) = 2,5-dioxopentanoate + CO2 + H2O. Its pathway is carbohydrate acid metabolism; D-glucarate degradation; 2,5-dioxopentanoate from D-glucarate: step 2/2. The protein is Probable 5-dehydro-4-deoxyglucarate dehydratase of Pseudomonas putida (strain W619).